The chain runs to 66 residues: Large ribosomal subunit protein bL35 (66 aa).

The protein belongs to the bacterial ribosomal protein bL35 family.

This Azorhizobium caulinodans (strain ATCC 43989 / DSM 5975 / JCM 20966 / LMG 6465 / NBRC 14845 / NCIMB 13405 / ORS 571) protein is Large ribosomal subunit protein bL35.